We begin with the raw amino-acid sequence, 481 residues long: Sulfate adenylyltransferase subunit 1 (481 aa).

One can recognise a tr-type G domain in the interval 22–236 (KDLLRFITCG…LLDSIRLDAD (215 aa)). Residues 31-38 (GSVDDGKS) are G1. Residue 31-38 (GSVDDGKS) participates in GTP binding. Positions 89–93 (GITID) are G2. Residues 110–113 (DCPG) form a G3 region. Residues 110–114 (DCPGH) and 165–168 (NKMD) each bind GTP. The interval 165 to 168 (NKMD) is G4. The tract at residues 202 to 204 (SAL) is G5.

Belongs to the TRAFAC class translation factor GTPase superfamily. Classic translation factor GTPase family. CysN/NodQ subfamily. As to quaternary structure, heterodimer composed of CysD, the smaller subunit, and CysN.

It carries out the reaction sulfate + ATP + H(+) = adenosine 5'-phosphosulfate + diphosphate. It participates in sulfur metabolism; hydrogen sulfide biosynthesis; sulfite from sulfate: step 1/3. Functionally, with CysD forms the ATP sulfurylase (ATPS) that catalyzes the adenylation of sulfate producing adenosine 5'-phosphosulfate (APS) and diphosphate, the first enzymatic step in sulfur assimilation pathway. APS synthesis involves the formation of a high-energy phosphoric-sulfuric acid anhydride bond driven by GTP hydrolysis by CysN coupled to ATP hydrolysis by CysD. This is Sulfate adenylyltransferase subunit 1 from Laribacter hongkongensis (strain HLHK9).